The following is an 81-amino-acid chain: Short neurotoxin 1 (81 aa).

The first 21 residues, 1-21, serve as a signal peptide directing secretion; sequence MKTLLLTLVVVTIVCLDLGYT. 4 cysteine pairs are disulfide-bonded: Cys-24/Cys-43, Cys-38/Cys-60, Cys-62/Cys-73, and Cys-74/Cys-79.

The protein belongs to the three-finger toxin family. Short-chain subfamily. Type I alpha-neurotoxin sub-subfamily. As to expression, expressed by the venom gland.

The protein localises to the secreted. In terms of biological role, binds to muscle nicotinic acetylcholine receptor (nAChR) and inhibit acetylcholine from binding to the receptor, thereby impairing neuromuscular transmission. The chain is Short neurotoxin 1 from Cryptophis nigrescens (Eastern small-eyed snake).